The primary structure comprises 175 residues: Probable S-adenosyl-L-methionine-binding protein VirR (175 aa).

In terms of domain architecture, TsaA-like spans 35 to 165; the sequence is LFFVGKIRTP…DRSLSKPLAP (131 aa). Residues 52 to 54, 90 to 91, arginine 114, threonine 124, and 145 to 148 contribute to the S-adenosyl-L-methionine site; these read PRQ, HE, and LDGT.

Belongs to the tRNA methyltransferase O family.

The chain is Probable S-adenosyl-L-methionine-binding protein VirR (virR) from Rhizobium radiobacter (Agrobacterium tumefaciens).